A 274-amino-acid chain; its full sequence is Diaminopimelate epimerase (274 aa).

Positions 11, 44, and 64 each coordinate substrate. The Proton donor role is filled by cysteine 73. Substrate contacts are provided by residues 74-75, asparagine 157, asparagine 190, and 208-209; these read GN and ER. Cysteine 217 (proton acceptor) is an active-site residue. 218-219 provides a ligand contact to substrate; sequence GS.

It belongs to the diaminopimelate epimerase family. As to quaternary structure, homodimer.

It localises to the cytoplasm. The catalysed reaction is (2S,6S)-2,6-diaminopimelate = meso-2,6-diaminopimelate. It functions in the pathway amino-acid biosynthesis; L-lysine biosynthesis via DAP pathway; DL-2,6-diaminopimelate from LL-2,6-diaminopimelate: step 1/1. In terms of biological role, catalyzes the stereoinversion of LL-2,6-diaminopimelate (L,L-DAP) to meso-diaminopimelate (meso-DAP), a precursor of L-lysine and an essential component of the bacterial peptidoglycan. The chain is Diaminopimelate epimerase from Haemophilus influenzae (strain PittGG).